Here is a 289-residue protein sequence, read N- to C-terminus: tRNA pseudouridine synthase B (289 aa).

The active-site Nucleophile is D38.

Belongs to the pseudouridine synthase TruB family. Type 1 subfamily.

The enzyme catalyses uridine(55) in tRNA = pseudouridine(55) in tRNA. Its function is as follows. Responsible for synthesis of pseudouridine from uracil-55 in the psi GC loop of transfer RNAs. This Clostridium acetobutylicum (strain ATCC 824 / DSM 792 / JCM 1419 / IAM 19013 / LMG 5710 / NBRC 13948 / NRRL B-527 / VKM B-1787 / 2291 / W) protein is tRNA pseudouridine synthase B.